Reading from the N-terminus, the 339-residue chain is Serine/threonine-protein kinase SAPK2 (339 aa).

The Protein kinase domain occupies 4–260 (YEVIKDIGSG…IPEIKNHPWF (257 aa)). ATP is bound by residues 10–18 (IGSGNFGVA) and K33. Residue D123 is the Proton acceptor of the active site. The interval 253-339 (EIKNHPWFLK…EDSGDFVCAL (87 aa)) is C-terminal.

It belongs to the protein kinase superfamily. Ser/Thr protein kinase family. Interacts with BZIP46. Interacts with ABI5 and PP2C30. Interacts with PP2C51. In terms of processing, phosphorylated. Expressed in leaf blades, leaf sheaths and roots. Expressed in shoots and roots of young seedlings.

The protein resides in the cytoplasm. Its subcellular location is the nucleus. The catalysed reaction is L-seryl-[protein] + ATP = O-phospho-L-seryl-[protein] + ADP + H(+). It carries out the reaction L-threonyl-[protein] + ATP = O-phospho-L-threonyl-[protein] + ADP + H(+). With respect to regulation, activated by phosphorylation in response to hyperosmotic stress within 5 minutes. In terms of biological role, may play a role in signal transduction of hyperosmotic response. Can phosphorylate BZIP46 in vitro. Together with ABI5, PP2C30 and PYL5, is part of an abscisic acid (ABA) signaling unit that modulates seed germination and early seedling growth. The protein is Serine/threonine-protein kinase SAPK2 (SAPK2) of Oryza sativa subsp. japonica (Rice).